The following is a 424-amino-acid chain: Folate-like transporter 2 (424 aa).

An N-linked (GlcNAc...) asparagine glycan is attached at Asn-35. The next 6 membrane-spanning stretches (helical) occupy residues 48 to 68, 71 to 91, 99 to 119, 136 to 156, 164 to 184, and 233 to 253; these read IWTYSYLITLIPAFLLTDVFL, PLLVFEAFSYFLCWVIFVFGK, LEVFYGWATATEIAYFAYIYV, ALLVGRFLAYALAQLLIGLNW, IISLVAMTIAVFLALILPGVE, and PLILKWSVWSALSSCIFYQVT. The N-linked (GlcNAc...) asparagine glycan is linked to Asn-254. Helical transmembrane passes span 299 to 319, 324 to 344, 361 to 381, and 392 to 412; these read WGDLLLAVGSIGQAGLLFWMS, IVVLYLSYIFYRVIYQLTTTI, LFGINTFVALLLQSILTAVVI, and FVVYSCYHLVVAFGFAIIFGI.

Belongs to the reduced folate carrier (RFC) transporter (TC 2.A.48) family.

It localises to the membrane. Unlike folt-1, does not appear to act as a folate transporter. The protein is Folate-like transporter 2 (folt-2) of Caenorhabditis elegans.